Here is a 439-residue protein sequence, read N- to C-terminus: Glutamate-1-semialdehyde 2,1-aminomutase (439 aa).

Residue lysine 273 is modified to N6-(pyridoxal phosphate)lysine.

The protein belongs to the class-III pyridoxal-phosphate-dependent aminotransferase family. HemL subfamily. As to quaternary structure, homodimer. Requires pyridoxal 5'-phosphate as cofactor.

The protein localises to the cytoplasm. The enzyme catalyses (S)-4-amino-5-oxopentanoate = 5-aminolevulinate. It functions in the pathway porphyrin-containing compound metabolism; protoporphyrin-IX biosynthesis; 5-aminolevulinate from L-glutamyl-tRNA(Glu): step 2/2. The sequence is that of Glutamate-1-semialdehyde 2,1-aminomutase from Paenarthrobacter aurescens (strain TC1).